Consider the following 599-residue polypeptide: Elongation factor 4 (599 aa).

Residues 2–184 form the tr-type G domain; that stretch reads KNIRNFSIIA…RLVRDIPPPE (183 aa). GTP is bound by residues 14 to 19 and 131 to 134; these read DHGKST and NKID.

This sequence belongs to the TRAFAC class translation factor GTPase superfamily. Classic translation factor GTPase family. LepA subfamily.

The protein resides in the cell inner membrane. The enzyme catalyses GTP + H2O = GDP + phosphate + H(+). Functionally, required for accurate and efficient protein synthesis under certain stress conditions. May act as a fidelity factor of the translation reaction, by catalyzing a one-codon backward translocation of tRNAs on improperly translocated ribosomes. Back-translocation proceeds from a post-translocation (POST) complex to a pre-translocation (PRE) complex, thus giving elongation factor G a second chance to translocate the tRNAs correctly. Binds to ribosomes in a GTP-dependent manner. This Klebsiella pneumoniae subsp. pneumoniae (strain ATCC 700721 / MGH 78578) protein is Elongation factor 4.